A 311-amino-acid chain; its full sequence is F-box protein At3g18320 (311 aa).

Residues 1 to 46 form the F-box domain; the sequence is MTLPELPKDLVEEILCFVPATSLKRLRSTCKGWNRLFKDDKRFARK.

The sequence is that of F-box protein At3g18320 from Arabidopsis thaliana (Mouse-ear cress).